The sequence spans 291 residues: Short-chain dehydrogenase/reductase GME11359 (291 aa).

NADP(+) is bound by residues L18, D67, N96, Y177, K181, and V209. Y177 serves as the catalytic Proton acceptor. Catalysis depends on K181, which acts as the Lowers pKa of active site Tyr.

Belongs to the short-chain dehydrogenases/reductases (SDR) family.

The protein operates within secondary metabolite biosynthesis. In terms of biological role, short-chain dehydrogenase/reductase; part of the gene cluster that mediates the biosynthesis of dibenzodioxocinones such as pestalotiollide B, a novel class of inhibitors against cholesterol ester transfer protein (CEPT). The biosynthesis initiates from condensation of acetate and malonate units catalyzed by the non-reducing PKS pks8/GME11356. Pks8/GME11356 lacks a thioesterase (TE) domain, which is important to the cyclizing of the third ring of atrochrysone carboxylic acid, and the esterase GME11355 might play the role of TE and catalyzes the cyclization reaction of the C ring. The lactamase-like protein GME11357 (or other beta-lactamases in Pestalotiopsis microspora) probably hydrolyzes the thioester bond between the ACP of pks8/GME11356 and the intermediate to release atrochrysone carboxylic acid, which is spontaneously dehydrates to form endocrocin anthrone. Endocrocin anthrone is further converted to emodin via the endocrocin intermediate. Emodin is then oxidized by several enzymes such as the Baeyer-Villiger oxidase GME11358, the oxidoreductase GME11367, the short chain dehydrogenase/reductase GME11373, as well as by other oxidoreductases from the cluster, to modify the A and C rings and open the B ring, and finally yield monodictyphenone. The prenyltransferase GME11375 may catalyze the addition reaction between the C5 side chains and the carbon bone of dibenzodioxocinones. The remaining biochemical reactions to the final product dibenzodioxocinones should be methylation catalyzed by methyltransferase GME11366 and reduction and lactonization reaction catalyzed by a series of oxidordeuctases. In Pestalotiopsis microspora, this protein is Short-chain dehydrogenase/reductase GME11359.